Here is a 209-residue protein sequence, read N- to C-terminus: ATP-dependent Clp protease proteolytic subunit 2 (209 aa).

The Nucleophile role is filled by serine 106. Histidine 131 is an active-site residue.

It belongs to the peptidase S14 family. In terms of assembly, fourteen ClpP subunits assemble into 2 heptameric rings which stack back to back to give a disk-like structure with a central cavity, resembling the structure of eukaryotic proteasomes.

The protein resides in the cytoplasm. The catalysed reaction is Hydrolysis of proteins to small peptides in the presence of ATP and magnesium. alpha-casein is the usual test substrate. In the absence of ATP, only oligopeptides shorter than five residues are hydrolyzed (such as succinyl-Leu-Tyr-|-NHMec, and Leu-Tyr-Leu-|-Tyr-Trp, in which cleavage of the -Tyr-|-Leu- and -Tyr-|-Trp bonds also occurs).. In terms of biological role, cleaves peptides in various proteins in a process that requires ATP hydrolysis. Has a chymotrypsin-like activity. Plays a major role in the degradation of misfolded proteins. The sequence is that of ATP-dependent Clp protease proteolytic subunit 2 from Rhizobium etli (strain ATCC 51251 / DSM 11541 / JCM 21823 / NBRC 15573 / CFN 42).